We begin with the raw amino-acid sequence, 541 residues long: Neutral amino acid transporter B(0) (541 aa).

Residue M1 is modified to N-acetylmethionine. Residues 1 to 10 show a composition bias toward basic and acidic residues; the sequence is MVADPPKGDP. A disordered region spans residues 1 to 32; sequence MVADPPKGDPKGLAAVEPTANGAPAQDPLEDS. Over 1–52 the chain is Cytoplasmic; sequence MVADPPKGDPKGLAAVEPTANGAPAQDPLEDSGAAVGRCCSSRDQVRRCLRA. Residues 53-82 traverse the membrane as a helical segment; sequence NLLVLLTVVAVVAGVALGLAVSGAGGALAL. Residues 83 to 95 are Extracellular-facing; the sequence is GPARLIAFAFPGE. Residues 96 to 117 form a helical membrane-spanning segment; it reads LLLRLLKMIILPLVVCSLVGGA. Residues 118 to 131 lie on the Cytoplasmic side of the membrane; it reads ASLDPSALGRLGAW. Residues 132-154 form a helical membrane-spanning segment; it reads ALLFFLVTTLLASALGVGLALAL. The Extracellular segment spans residues 155–225; sequence QPGAAFAAMN…GTLVKVPVAH (71 aa). N164 and N215 each carry an N-linked (GlcNAc...) asparagine glycan. Residues 226 to 249 traverse the membrane as a helical segment; the sequence is EEEGMNILGLVVFAIVFGVALRKL. Topologically, residues 250–258 are cytoplasmic; that stretch reads GPEGEPLIR. A helical membrane pass occupies residues 259-286; sequence FFNSFNDATMVLVSWIMWYAPVGILFLV. At 287–307 the chain is on the extracellular side; that stretch reads ASKIVEMDDVGVLFASLGKYI. Residues 308-329 form a helical membrane-spanning segment; sequence LCCLLGHAIHGLLVLPLIYFLF. The Cytoplasmic segment spans residues 330–334; the sequence is TRKNP. Residues 335–365 constitute an intramembrane region (discontinuously helical); the sequence is YRFLWGILTPLAMAFGTSSSSATLPLMMKCV. Over 366–374 the chain is Cytoplasmic; the sequence is EERNGVAKH. Residues 375 to 401 form a helical membrane-spanning segment; the sequence is ISRFVLPIGATVNMDGAALFQCVAAVF. Residues G383, T385, and N387 each contribute to the Na(+) site. At 402 to 414 the chain is on the extracellular side; the sequence is IAQLNRQSLDFVK. The segment at residues 415–448 is an intramembrane region (discontinuously helical); it reads IITILVTATASSVGAAGIPAGGVLTLAIILEAVS. Residues 449–461 lie on the Extracellular side of the membrane; the sequence is LPVSEISLILAVD. A helical transmembrane segment spans residues 462–483; sequence WLVDRSCTIINVEGDAFGAGLL. Na(+)-binding residues include N472 and D476. At 484–541 the chain is on the cytoplasmic side; that stretch reads QHYVDRTEQRGSEPELTQVKSEVPLGSLPAPNEEGNPLLRHSPGAAGDAGACEKESVM. Positions 493–541 are disordered; that stretch reads RGSEPELTQVKSEVPLGSLPAPNEEGNPLLRHSPGAAGDAGACEKESVM. Phosphoserine occurs at positions 495, 504, and 539.

Belongs to the dicarboxylate/amino acid:cation symporter (DAACS) (TC 2.A.23) family. SLC1A5 subfamily. Homotrimer.

It localises to the cell membrane. Its subcellular location is the melanosome. The enzyme catalyses L-glutamine(out) + L-serine(in) + Na(+)(out) = L-glutamine(in) + L-serine(out) + Na(+)(in). It catalyses the reaction L-glutamine(in) + L-serine(out) + Na(+)(out) = L-glutamine(out) + L-serine(in) + Na(+)(in). It carries out the reaction L-threonine(in) + L-glutamine(out) + Na(+)(out) = L-threonine(out) + L-glutamine(in) + Na(+)(in). The catalysed reaction is L-threonine(out) + L-glutamine(in) + Na(+)(out) = L-threonine(in) + L-glutamine(out) + Na(+)(in). The enzyme catalyses L-asparagine(in) + L-glutamine(out) + Na(+)(out) = L-asparagine(out) + L-glutamine(in) + Na(+)(in). It catalyses the reaction L-asparagine(out) + L-glutamine(in) + Na(+)(out) = L-asparagine(in) + L-glutamine(out) + Na(+)(in). It carries out the reaction L-glutamine(in) + L-alanine(out) + Na(+)(out) = L-glutamine(out) + L-alanine(in) + Na(+)(in). The catalysed reaction is L-valine(out) + L-glutamine(in) + Na(+)(out) = L-valine(in) + L-glutamine(out) + Na(+)(in). The enzyme catalyses L-glutamine(in) + L-methionine(out) + Na(+)(out) = L-glutamine(out) + L-methionine(in) + Na(+)(in). It catalyses the reaction L-glutamine(in) + L-glutamate(out) + Na(+)(out) + H(+)(out) = L-glutamine(out) + L-glutamate(in) + Na(+)(in) + H(+)(in). It carries out the reaction D-serine(in) + L-glutamine(out) + Na(+)(out) = D-serine(out) + L-glutamine(in) + Na(+)(in). The catalysed reaction is D-serine(in) + L-alanine(out) + Na(+)(out) = D-serine(out) + L-alanine(in) + Na(+)(in). The enzyme catalyses nitrate(in) = nitrate(out). It catalyses the reaction iodide(out) = iodide(in). It carries out the reaction thiocyanate(in) = thiocyanate(out). Its function is as follows. Sodium-coupled antiporter of neutral amino acids. In a tri-substrate transport cycle, exchanges neutral amino acids between the extracellular and intracellular compartments, coupled to the inward cotransport of at least one sodium ion. The preferred substrate is the essential amino acid L-glutamine, a precursor for biosynthesis of proteins, nucleotides and amine sugars as well as an alternative fuel for mitochondrial oxidative phosphorylation. Exchanges L-glutamine with other neutral amino acids such as L-serine, L-threonine and L-asparagine in a bidirectional way. Provides L-glutamine to proliferating stem and activated cells driving the metabolic switch toward cell differentiation. The transport cycle is usually pH-independent, with the exception of L-glutamate. Transports extracellular L-glutamate coupled to the cotransport of one proton and one sodium ion in exchange for intracellular L-glutamine counter-ion. May provide for L-glutamate uptake in glial cells regulating glutamine/glutamate cycle in the nervous system. Can transport D-amino acids. Mediates D-serine release from the retinal glia potentially affecting NMDA receptor function in retinal neurons. Displays sodium- and amino acid-dependent but uncoupled channel-like anion conductance with a preference SCN(-) &gt;&gt; NO3(-) &gt; I(-) &gt; Cl(-). Through binding of the fusogenic protein syncytin-1/ERVW-1 may mediate trophoblasts syncytialization, the spontaneous fusion of their plasma membranes, an essential process in placental development. The sequence is that of Neutral amino acid transporter B(0) (SLC1A5) from Oryctolagus cuniculus (Rabbit).